The primary structure comprises 215 residues: Protein ERP2 (215 aa).

Residues 1–25 form the signal peptide; the sequence is MIKSTIALPSFFIVLILALVNSVAA. Residues 26-182 lie on the Lumenal side of the membrane; sequence SSSYAPVAIS…TVNSTESRLT (157 aa). Residues 41 to 123 enclose the GOLD domain; sequence KECLYYDMVT…LKKVEITLEK (83 aa). The chain crosses the membrane as a helical span at residues 183–203; the sequence is WLSILIIIIIAVISIAQVLLI. Residues 204-215 lie on the Cytoplasmic side of the membrane; that stretch reads QFLFTGRQKNYV.

It belongs to the EMP24/GP25L family. Associates with EMP24, ERV25 and ERP1.

The protein resides in the endoplasmic reticulum membrane. Functionally, involved in vesicular protein trafficking. The chain is Protein ERP2 (ERP2) from Saccharomyces cerevisiae (strain ATCC 204508 / S288c) (Baker's yeast).